A 408-amino-acid polypeptide reads, in one-letter code: Argininosuccinate synthase (408 aa).

ATP contacts are provided by residues 10–18 (AYSGGLDTS) and Ala37. Positions 90 and 95 each coordinate L-citrulline. Gly120 contacts ATP. 3 residues coordinate L-aspartate: Thr122, Asn126, and Asp127. Asn126 lines the L-citrulline pocket. 5 residues coordinate L-citrulline: Arg130, Ser181, Ser190, Glu266, and Tyr278.

This sequence belongs to the argininosuccinate synthase family. Type 1 subfamily. In terms of assembly, homotetramer.

It is found in the cytoplasm. It catalyses the reaction L-citrulline + L-aspartate + ATP = 2-(N(omega)-L-arginino)succinate + AMP + diphosphate + H(+). Its pathway is amino-acid biosynthesis; L-arginine biosynthesis; L-arginine from L-ornithine and carbamoyl phosphate: step 2/3. This is Argininosuccinate synthase from Laribacter hongkongensis (strain HLHK9).